We begin with the raw amino-acid sequence, 208 residues long: Thymidylate kinase (208 aa).

10-17 is a binding site for ATP; sequence GPDGSGKT.

It belongs to the thymidylate kinase family.

It carries out the reaction dTMP + ATP = dTDP + ADP. Its function is as follows. Phosphorylation of dTMP to form dTDP in both de novo and salvage pathways of dTTP synthesis. In Listeria monocytogenes serotype 4a (strain HCC23), this protein is Thymidylate kinase.